The sequence spans 427 residues: Serine--tRNA ligase (427 aa).

231–233 (TAE) provides a ligand contact to L-serine. 262–264 (RSE) lines the ATP pocket. An L-serine-binding site is contributed by E285. Position 349–352 (349–352 (EISS)) interacts with ATP. Position 385 (S385) interacts with L-serine.

The protein belongs to the class-II aminoacyl-tRNA synthetase family. Type-1 seryl-tRNA synthetase subfamily. Homodimer. The tRNA molecule binds across the dimer.

It localises to the cytoplasm. It catalyses the reaction tRNA(Ser) + L-serine + ATP = L-seryl-tRNA(Ser) + AMP + diphosphate + H(+). It carries out the reaction tRNA(Sec) + L-serine + ATP = L-seryl-tRNA(Sec) + AMP + diphosphate + H(+). It participates in aminoacyl-tRNA biosynthesis; selenocysteinyl-tRNA(Sec) biosynthesis; L-seryl-tRNA(Sec) from L-serine and tRNA(Sec): step 1/1. Its function is as follows. Catalyzes the attachment of serine to tRNA(Ser). Is also able to aminoacylate tRNA(Sec) with serine, to form the misacylated tRNA L-seryl-tRNA(Sec), which will be further converted into selenocysteinyl-tRNA(Sec). The protein is Serine--tRNA ligase of Brucella melitensis biotype 2 (strain ATCC 23457).